Here is a 247-residue protein sequence, read N- to C-terminus: 2,3-bisphosphoglycerate-dependent phosphoglycerate mutase (247 aa).

Substrate-binding positions include 8 to 15, 21 to 22, R60, 87 to 90, K98, 114 to 115, and 183 to 184; these read RHGESTWN, TG, ERHY, RR, and GN. H9 (tele-phosphohistidine intermediate) is an active-site residue. The Proton donor/acceptor role is filled by E87.

It belongs to the phosphoglycerate mutase family. BPG-dependent PGAM subfamily. As to quaternary structure, homodimer.

The catalysed reaction is (2R)-2-phosphoglycerate = (2R)-3-phosphoglycerate. It functions in the pathway carbohydrate degradation; glycolysis; pyruvate from D-glyceraldehyde 3-phosphate: step 3/5. In terms of biological role, catalyzes the interconversion of 2-phosphoglycerate and 3-phosphoglycerate. The chain is 2,3-bisphosphoglycerate-dependent phosphoglycerate mutase from Albidiferax ferrireducens (strain ATCC BAA-621 / DSM 15236 / T118) (Rhodoferax ferrireducens).